Consider the following 62-residue polypeptide: Photosystem II reaction center protein Z (62 aa).

Transmembrane regions (helical) follow at residues 8–28 and 41–61; these read AVFALIAISFLLVIGVPVVLA and FSGASLWIGLVFLVGILNSFI.

This sequence belongs to the PsbZ family. PSII is composed of 1 copy each of membrane proteins PsbA, PsbB, PsbC, PsbD, PsbE, PsbF, PsbH, PsbI, PsbJ, PsbK, PsbL, PsbM, PsbT, PsbY, PsbZ, Psb30/Ycf12, at least 3 peripheral proteins of the oxygen-evolving complex and a large number of cofactors. It forms dimeric complexes.

The protein localises to the plastid. Its subcellular location is the chloroplast thylakoid membrane. May control the interaction of photosystem II (PSII) cores with the light-harvesting antenna, regulates electron flow through the 2 photosystem reaction centers. PSII is a light-driven water plastoquinone oxidoreductase, using light energy to abstract electrons from H(2)O, generating a proton gradient subsequently used for ATP formation. This is Photosystem II reaction center protein Z from Marchantia polymorpha (Common liverwort).